Consider the following 145-residue polypeptide: Mediator of RNA polymerase II transcription subunit 21 (145 aa).

The stretch at 79–112 (EESTAALQAASLRQLEEENQEAAARLEEVVYRGD) forms a coiled coil.

It belongs to the Mediator complex subunit 21 family. In terms of assembly, component of the Mediator complex.

It is found in the nucleus. In terms of biological role, component of the Mediator complex, a coactivator involved in the regulated transcription of nearly all RNA polymerase II-dependent genes. Mediator functions as a bridge to convey information from gene-specific regulatory proteins to the basal RNA polymerase II transcription machinery. Mediator is recruited to promoters by direct interactions with regulatory proteins and serves as a scaffold for the assembly of a functional preinitiation complex with RNA polymerase II and the general transcription factors. This Danio rerio (Zebrafish) protein is Mediator of RNA polymerase II transcription subunit 21 (med21).